The following is a 162-amino-acid chain: RNA pyrophosphohydrolase (162 aa).

The Nudix hydrolase domain maps to proline 11–alanine 155. The short motif at glycine 45–glycine 66 is the Nudix box element.

Belongs to the Nudix hydrolase family. RppH subfamily. It depends on a divalent metal cation as a cofactor.

Functionally, accelerates the degradation of transcripts by removing pyrophosphate from the 5'-end of triphosphorylated RNA, leading to a more labile monophosphorylated state that can stimulate subsequent ribonuclease cleavage. The sequence is that of RNA pyrophosphohydrolase from Cereibacter sphaeroides (strain ATCC 17023 / DSM 158 / JCM 6121 / CCUG 31486 / LMG 2827 / NBRC 12203 / NCIMB 8253 / ATH 2.4.1.) (Rhodobacter sphaeroides).